Here is a 229-residue protein sequence, read N- to C-terminus: Potassium/proton antiporter CemA (229 aa).

A run of 3 helical transmembrane segments spans residues Ala-6–Cys-26, Ile-107–Gly-127, and Ile-189–Ile-209.

This sequence belongs to the CemA family.

The protein resides in the plastid. The protein localises to the chloroplast inner membrane. It catalyses the reaction K(+)(in) + H(+)(out) = K(+)(out) + H(+)(in). Contributes to K(+)/H(+) antiport activity by supporting proton efflux to control proton extrusion and homeostasis in chloroplasts in a light-dependent manner to modulate photosynthesis. Prevents excessive induction of non-photochemical quenching (NPQ) under continuous-light conditions. Indirectly promotes efficient inorganic carbon uptake into chloroplasts. The sequence is that of Potassium/proton antiporter CemA from Arabis hirsuta (Hairy rock-cress).